The primary structure comprises 1421 residues: Cytoadherence-linked asexual protein 3.2 (1421 aa).

A signal peptide spans 1 to 24; it reads MVSFFKTPIIIFFFLLCLNEKVLC. 4 cysteine pairs are disulfide-bonded: C335–C363, C409–C415, C519–C547, and C523–C544. The helical transmembrane segment at 1203 to 1223 threads the bilayer; that stretch reads NFFMELANGFMYAFCFFAISQ. C1352 and C1355 are joined by a disulfide. Residues 1371–1413 form a disordered region; it reads GDKNTNETTEIKKQTSTYIDTEKMNEADSADSDDEKDFDTPDN. Positions 1398-1412 are enriched in acidic residues; sequence DSADSDDEKDFDTPD.

As to quaternary structure, component of the RhopH complex. RhopH complex is at least composed of CLAG3.1/CLAG3.2, RhopH2 and RhopH3 with a 1:1:1 subunit stoichiometry. CLAG3.1/CLAG3.2 mediates subunit association through independent contacts with RhopH2 and RhopH3, which do not directly interact with one another. Interacts with RhopH2. Interacts with RhopH3.

Its subcellular location is the host cell membrane. It localises to the parasitophorous vacuole membrane. The protein resides in the host cytoplasm. The protein localises to the cytoplasmic vesicle. It is found in the secretory vesicle. Its subcellular location is the rhoptry. Its function is as follows. Participates in the formation of new permeability pathways in Plasmodium-infected erythrocytes enabling the uptake of nutrients from the blood plasma. The chain is Cytoadherence-linked asexual protein 3.2 from Plasmodium falciparum.